A 239-amino-acid polypeptide reads, in one-letter code: Methylthioribulose-1-phosphate dehydratase (239 aa).

C94 is a substrate binding site. H112 and H114 together coordinate Zn(2+). E136 acts as the Proton donor/acceptor in catalysis. Position 192 (H192) interacts with Zn(2+).

Belongs to the aldolase class II family. MtnB subfamily. Requires Zn(2+) as cofactor.

The protein localises to the cytoplasm. It carries out the reaction 5-(methylsulfanyl)-D-ribulose 1-phosphate = 5-methylsulfanyl-2,3-dioxopentyl phosphate + H2O. Its pathway is amino-acid biosynthesis; L-methionine biosynthesis via salvage pathway; L-methionine from S-methyl-5-thio-alpha-D-ribose 1-phosphate: step 2/6. Functionally, catalyzes the dehydration of methylthioribulose-1-phosphate (MTRu-1-P) into 2,3-diketo-5-methylthiopentyl-1-phosphate (DK-MTP-1-P). Functions in the methionine salvage pathway. May play a role in apoptosis. The sequence is that of Methylthioribulose-1-phosphate dehydratase from Aquarana catesbeiana (American bullfrog).